The primary structure comprises 156 residues: ATP synthase subunit b (156 aa).

A helical membrane pass occupies residues 7–27; sequence FFAQMVVFFILWWVVAKFIWP.

It belongs to the ATPase B chain family. In terms of assembly, F-type ATPases have 2 components, F(1) - the catalytic core - and F(0) - the membrane proton channel. F(1) has five subunits: alpha(3), beta(3), gamma(1), delta(1), epsilon(1). F(0) has three main subunits: a(1), b(2) and c(10-14). The alpha and beta chains form an alternating ring which encloses part of the gamma chain. F(1) is attached to F(0) by a central stalk formed by the gamma and epsilon chains, while a peripheral stalk is formed by the delta and b chains.

It localises to the cell inner membrane. Functionally, f(1)F(0) ATP synthase produces ATP from ADP in the presence of a proton or sodium gradient. F-type ATPases consist of two structural domains, F(1) containing the extramembraneous catalytic core and F(0) containing the membrane proton channel, linked together by a central stalk and a peripheral stalk. During catalysis, ATP synthesis in the catalytic domain of F(1) is coupled via a rotary mechanism of the central stalk subunits to proton translocation. Its function is as follows. Component of the F(0) channel, it forms part of the peripheral stalk, linking F(1) to F(0). The sequence is that of ATP synthase subunit b from Cupriavidus taiwanensis (strain DSM 17343 / BCRC 17206 / CCUG 44338 / CIP 107171 / LMG 19424 / R1) (Ralstonia taiwanensis (strain LMG 19424)).